The sequence spans 55 residues: MPQLEFAWWIVNFSLIWASVLIVISLLLNSFPPNSAGQSSSSLTLNKTTTNWQWL.

The chain crosses the membrane as a helical span at residues 8 to 28 (WWIVNFSLIWASVLIVISLLL). The interval 34-55 (NSAGQSSSSLTLNKTTTNWQWL) is disordered. The span at 39-55 (SSSSLTLNKTTTNWQWL) shows a compositional bias: low complexity.

The protein belongs to the ATPase protein 8 family. F-type ATPases have 2 components, CF(1) - the catalytic core - and CF(0) - the membrane proton channel.

It localises to the mitochondrion membrane. Its function is as follows. Mitochondrial membrane ATP synthase (F(1)F(0) ATP synthase or Complex V) produces ATP from ADP in the presence of a proton gradient across the membrane which is generated by electron transport complexes of the respiratory chain. F-type ATPases consist of two structural domains, F(1) - containing the extramembraneous catalytic core and F(0) - containing the membrane proton channel, linked together by a central stalk and a peripheral stalk. During catalysis, ATP synthesis in the catalytic domain of F(1) is coupled via a rotary mechanism of the central stalk subunits to proton translocation. Part of the complex F(0) domain. Minor subunit located with subunit a in the membrane. The sequence is that of ATP synthase protein 8 (MT-ATP8) from Strongylocentrotus purpuratus (Purple sea urchin).